The following is a 121-amino-acid chain: MAFKHQLILSTAILLAVLAAASASFREQCVPGREITYESLNARREYAVRQTCGYYLSAERQKRRCCDELSKVPELCWCEVLRILMDRRVTKEGVVKGSLLQDMSRCKKLTREFIAGIVGRE.

Positions 1-24 (MAFKHQLILSTAILLAVLAAASAS) are cleaved as a signal peptide.

This sequence belongs to the protease inhibitor I6 (cereal trypsin/alpha-amylase inhibitor) family.

It is found in the secreted. The polypeptide is Trypsin/alpha-amylase inhibitor CMX1/CMX3 (Triticum aestivum (Wheat)).